A 457-amino-acid polypeptide reads, in one-letter code: Arginine biosynthesis bifunctional protein ArgJ, mitochondrial (457 aa).

The substrate site is built by T184, K213, T224, E312, N452, and T457. The Nucleophile role is filled by T224.

The protein belongs to the ArgJ family. In terms of assembly, heterodimer of an alpha and a beta chain. In terms of processing, the alpha and beta chains are autoproteolytically processed from a single precursor protein within the mitochondrion.

It localises to the mitochondrion matrix. The catalysed reaction is N(2)-acetyl-L-ornithine + L-glutamate = N-acetyl-L-glutamate + L-ornithine. It carries out the reaction L-glutamate + acetyl-CoA = N-acetyl-L-glutamate + CoA + H(+). Its pathway is amino-acid biosynthesis; L-arginine biosynthesis; L-ornithine and N-acetyl-L-glutamate from L-glutamate and N(2)-acetyl-L-ornithine (cyclic): step 1/1. The protein operates within amino-acid biosynthesis; L-arginine biosynthesis; N(2)-acetyl-L-ornithine from L-glutamate: step 1/4. Its function is as follows. Catalyzes two activities which are involved in the cyclic version of arginine biosynthesis: the synthesis of acetylglutamate from glutamate and acetyl-CoA, and of ornithine by transacetylation between acetylornithine and glutamate. In Aspergillus terreus (strain NIH 2624 / FGSC A1156), this protein is Arginine biosynthesis bifunctional protein ArgJ, mitochondrial.